The primary structure comprises 239 residues: Ribonuclease PH (239 aa).

Phosphate contacts are provided by residues R87 and 125 to 127; that span reads GTR.

Belongs to the RNase PH family. As to quaternary structure, homohexameric ring arranged as a trimer of dimers.

The enzyme catalyses tRNA(n+1) + phosphate = tRNA(n) + a ribonucleoside 5'-diphosphate. Its function is as follows. Phosphorolytic 3'-5' exoribonuclease that plays an important role in tRNA 3'-end maturation. Removes nucleotide residues following the 3'-CCA terminus of tRNAs; can also add nucleotides to the ends of RNA molecules by using nucleoside diphosphates as substrates, but this may not be physiologically important. Probably plays a role in initiation of 16S rRNA degradation (leading to ribosome degradation) during starvation. In Pseudomonas aeruginosa (strain LESB58), this protein is Ribonuclease PH.